We begin with the raw amino-acid sequence, 320 residues long: Nucleotide-binding protein Acid_7395 (320 aa).

A disordered region spans residues 1–34 (MPLRKKGAATTKAAATRKDSAKAPASSKRKDAPQ). An ATP-binding site is contributed by 44–51 (GLSGSGKG). GTP is bound at residue 94–97 (DIRE).

Belongs to the RapZ-like family.

In terms of biological role, displays ATPase and GTPase activities. This Solibacter usitatus (strain Ellin6076) protein is Nucleotide-binding protein Acid_7395.